Reading from the N-terminus, the 488-residue chain is 3-octaprenyl-4-hydroxybenzoate carboxy-lyase (488 aa).

Asparagine 172 provides a ligand contact to Mn(2+). Prenylated FMN contacts are provided by residues 175 to 177 (IYR), 189 to 191 (RWL), and 194 to 195 (RG). Glutamate 238 provides a ligand contact to Mn(2+). Aspartate 287 functions as the Proton donor in the catalytic mechanism.

This sequence belongs to the UbiD family. Homohexamer. Requires prenylated FMN as cofactor. Mn(2+) serves as cofactor.

The protein localises to the cell membrane. The catalysed reaction is a 4-hydroxy-3-(all-trans-polyprenyl)benzoate + H(+) = a 2-(all-trans-polyprenyl)phenol + CO2. It functions in the pathway cofactor biosynthesis; ubiquinone biosynthesis. Catalyzes the decarboxylation of 3-octaprenyl-4-hydroxy benzoate to 2-octaprenylphenol, an intermediate step in ubiquinone biosynthesis. This chain is 3-octaprenyl-4-hydroxybenzoate carboxy-lyase, found in Pseudomonas paraeruginosa (strain DSM 24068 / PA7) (Pseudomonas aeruginosa (strain PA7)).